We begin with the raw amino-acid sequence, 94 residues long: Small ribosomal subunit protein bS18 (94 aa).

It belongs to the bacterial ribosomal protein bS18 family. As to quaternary structure, part of the 30S ribosomal subunit. Forms a tight heterodimer with protein bS6.

Functionally, binds as a heterodimer with protein bS6 to the central domain of the 16S rRNA, where it helps stabilize the platform of the 30S subunit. The sequence is that of Small ribosomal subunit protein bS18 from Leptospira biflexa serovar Patoc (strain Patoc 1 / Ames).